A 644-amino-acid chain; its full sequence is DNA mismatch repair protein MutL (644 aa).

2 disordered regions span residues arginine 338 to alanine 390 and glutamine 416 to glutamine 445. Low complexity-rich tracts occupy residues glutamate 349 to alanine 366 and glutamine 416 to threonine 427.

The protein belongs to the DNA mismatch repair MutL/HexB family.

This protein is involved in the repair of mismatches in DNA. It is required for dam-dependent methyl-directed DNA mismatch repair. May act as a 'molecular matchmaker', a protein that promotes the formation of a stable complex between two or more DNA-binding proteins in an ATP-dependent manner without itself being part of a final effector complex. The polypeptide is DNA mismatch repair protein MutL (Chromohalobacter salexigens (strain ATCC BAA-138 / DSM 3043 / CIP 106854 / NCIMB 13768 / 1H11)).